The chain runs to 260 residues: HTH-type transcriptional repressor NanR (260 aa).

Residues 1-21 (MSAFDHSSDDTQETIGNSLRR) are disordered. In terms of domain architecture, HTH gntR-type spans 27 to 95 (KKLSEMVEEE…NGERARVSRP (69 aa)). Residues 55-74 (ERELMAFFNVGRPSVREALA) constitute a DNA-binding region (H-T-H motif).

The protein belongs to the NanR family.

Transcriptional repressor that controls expression of the genes required for the catabolism of sialic acids. The sequence is that of HTH-type transcriptional repressor NanR from Klebsiella aerogenes (strain ATCC 13048 / DSM 30053 / CCUG 1429 / JCM 1235 / KCTC 2190 / NBRC 13534 / NCIMB 10102 / NCTC 10006 / CDC 819-56) (Enterobacter aerogenes).